Reading from the N-terminus, the 157-residue chain is Large ribosomal subunit protein uL11 (157 aa).

2 disordered regions span residues Met1–Pro28 and Asn138–Lys157. The segment covering Asn139–Lys157 has biased composition (basic and acidic residues).

This sequence belongs to the universal ribosomal protein uL11 family. Part of the ribosomal stalk of the 50S ribosomal subunit. Interacts with L10 and the large rRNA to form the base of the stalk. L10 forms an elongated spine to which L12 dimers bind in a sequential fashion forming a multimeric L10(L12)X complex.

Functionally, forms part of the ribosomal stalk which helps the ribosome interact with GTP-bound translation factors. The chain is Large ribosomal subunit protein uL11 from Haloquadratum walsbyi (strain DSM 16790 / HBSQ001).